Reading from the N-terminus, the 1230-residue chain is Serine/threonine-protein kinase CST20 (1230 aa).

The segment covering 1–20 has biased composition (polar residues); that stretch reads MSILSENNPTPTSITDPNKS. Disordered regions lie at residues 1–384 and 413–470; these read MSIL…TAHN and SSLE…HSQE. 2 stretches are compositionally biased toward low complexity: residues 57 to 70 and 96 to 125; these read NTTSANTSSLSLGS and SGSGDIDDSQQSHNNNNNNNNNNNESNPES. Residues 150 to 161 show a composition bias toward basic and acidic residues; the sequence is HQGDDSDNEKQY. 3 stretches are compositionally biased toward polar residues: residues 175–197, 207–224, and 237–246; these read DSYSPGTLESPGTLNALETNNVS, TSSLEDLSLSLQHQNENA, and PTSKTSSFHD. Residues 248–257 are compositionally biased toward low complexity; the sequence is SSVISSSTSV. Composition is skewed to polar residues over residues 262-277 and 311-330; these read SNPTSTRGSHLSSYKS and DTLSSATNSPNLLRNDTLQG. 2 stretches are compositionally biased toward low complexity: residues 349–381 and 439–468; these read NTSATSRNTSGTSTSTVVKNSRSGTSKSTSTST and KVRGVFSSMFGKNKSTSSSSSSNSGSNSHS. Residues 475–488 form the CRIB domain; it reads ISTPFNAKHLAHVG. 2 disordered regions span residues 545–831 and 867–919; these read FHFD…ALAD and LREK…KQAA. The segment covering 550 to 561 has biased composition (polar residues); the sequence is NKSSSSGWSNEN. The segment covering 570–581 has biased composition (gly residues); the sequence is SNSGSGSGGGGA. The segment covering 604 to 613 has biased composition (polar residues); the sequence is ITPSQSMPTK. A compositionally biased stretch (basic and acidic residues) spans 614 to 628; that stretch reads TESKQSENQHPHEDN. Positions 629-642 are enriched in polar residues; the sequence is ATQYTPRTPTSHVQ. Low complexity-rich tracts occupy residues 670–683, 696–710, and 736–749; these read PSSQSLPRSDSQSD, SPSKIKIRSISSKSL, and SIPKSKSHSASLSS. Positions 750–761 are enriched in polar residues; the sequence is QLRPATNGSTTA. Positions 789-807 are enriched in pro residues; that stretch reads APPPPPSAPPAPPVPPAPP. Positions 811–826 are enriched in polar residues; the sequence is LSEQTSEIPQQRTAPS. A compositionally biased stretch (basic and acidic residues) spans 867–876; sequence LREKNERQNR. Positions 877-892 are enriched in polar residues; the sequence is QQETGQNNADTASGGS. The 253-residue stretch at 953–1205 folds into the Protein kinase domain; the sequence is YVDLVKIGQG…ADELLHDNFI (253 aa). ATP contacts are provided by residues 959–967 and lysine 983; that span reads IGQGASGGV. Aspartate 1073 serves as the catalytic Proton acceptor.

Belongs to the protein kinase superfamily. STE Ser/Thr protein kinase family. STE20 subfamily.

Its subcellular location is the cytoplasm. It localises to the nucleus. It carries out the reaction L-seryl-[protein] + ATP = O-phospho-L-seryl-[protein] + ADP + H(+). It catalyses the reaction L-threonyl-[protein] + ATP = O-phospho-L-threonyl-[protein] + ADP + H(+). Functionally, MAP4K component of the MAPK pathway required for the mating pheromone response, and the regulation of cell polarity and cell cycle. Phosphorylates histone H2B to form H2BS10ph. Required for hyphal formation and virulence. In Candida albicans (Yeast), this protein is Serine/threonine-protein kinase CST20 (CST20).